The chain runs to 40 residues: Protein YneP (40 aa).

The polypeptide is Protein YneP (Escherichia coli (strain K12)).